Consider the following 316-residue polypeptide: Golgi to ER traffic protein 2 (316 aa).

The tract at residues 1–75 (MATELSDAEK…SDEEVEKSTK (75 aa)) is disordered. The Cytoplasmic portion of the chain corresponds to 1-167 (MATELSDAEK…LKYYKFKVSK (167 aa)). A compositionally biased stretch (basic and acidic residues) spans 7-19 (DAEKRKLLRERRQ). Polar residues-rich tracts occupy residues 22–48 (FSNG…STSV) and 56–65 (PSGNKKSSNV). The helical transmembrane segment at 168-187 (LKSYIILIKWALLAPYVYFI) threads the bilayer. The Lumenal segment spans residues 188–209 (MHPNPTVLQASNLLSQIVERSN). A helical transmembrane segment spans residues 210–229 (FFSIFTGLEIVFISIYYQML). The Cytoplasmic portion of the chain corresponds to 230–276 (KKLQRDNNVTATQNAGGILKYLTMIPEGILPIRNIQGKIGLALEYFD). The helical transmembrane segment at 277–297 (VASMYVTDICFVLVLFGVMKY) threads the bilayer. Residues 298–316 (YHSSFPISVPIEPPIAGIQ) lie on the Lumenal side of the membrane.

The protein belongs to the GET2 family. Component of the Golgi to ER traffic (GET) complex, which is composed of GET1, GET2 and GET3. Within the complex, GET1 and GET2 form a heterotetramer which is stabilized by phosphatidylinositol binding and which binds to the GET3 homodimer.

The protein resides in the endoplasmic reticulum membrane. It localises to the golgi apparatus membrane. Functionally, required for the post-translational delivery of tail-anchored (TA) proteins to the endoplasmic reticulum. Together with GET1, acts as a membrane receptor for soluble GET3, which recognizes and selectively binds the transmembrane domain of TA proteins in the cytosol. The GET complex cooperates with the HDEL receptor ERD2 to mediate the ATP-dependent retrieval of resident ER proteins that contain a C-terminal H-D-E-L retention signal from the Golgi to the ER. This chain is Golgi to ER traffic protein 2, found in Kluyveromyces lactis (strain ATCC 8585 / CBS 2359 / DSM 70799 / NBRC 1267 / NRRL Y-1140 / WM37) (Yeast).